The sequence spans 121 residues: MADTKPAAEQSGTYAIVEASGTQIWLQPNRYYDIDRLQAEVDDTIKLENVLLVKDGKGTTLGQPYVKDATVSLKVMAHRRGPKVIVYKMRPKKKTRRKNGHRQELTRVMVESISVGGKAIS.

The protein belongs to the bacterial ribosomal protein bL21 family. In terms of assembly, part of the 50S ribosomal subunit. Contacts protein L20.

Its function is as follows. This protein binds to 23S rRNA in the presence of protein L20. The polypeptide is Large ribosomal subunit protein bL21 (Synechococcus sp. (strain CC9605)).